Here is a 318-residue protein sequence, read N- to C-terminus: Thymidylate synthase (318 aa).

Residues arginine 25 and 180 to 181 contribute to the dUMP site; that span reads RR. Catalysis depends on cysteine 200, which acts as the Nucleophile. DUMP contacts are provided by residues 220 to 223, asparagine 231, and 261 to 263; these read RSGD and HIY. (6R)-5,10-methylene-5,6,7,8-tetrahydrofolate is bound at residue aspartate 223. (6R)-5,10-methylene-5,6,7,8-tetrahydrofolate is bound at residue alanine 317.

Belongs to the thymidylate synthase family. Bacterial-type ThyA subfamily. In terms of assembly, homodimer.

The protein resides in the cytoplasm. The catalysed reaction is dUMP + (6R)-5,10-methylene-5,6,7,8-tetrahydrofolate = 7,8-dihydrofolate + dTMP. It participates in pyrimidine metabolism; dTTP biosynthesis. In terms of biological role, catalyzes the reductive methylation of 2'-deoxyuridine-5'-monophosphate (dUMP) to 2'-deoxythymidine-5'-monophosphate (dTMP) while utilizing 5,10-methylenetetrahydrofolate (mTHF) as the methyl donor and reductant in the reaction, yielding dihydrofolate (DHF) as a by-product. This enzymatic reaction provides an intracellular de novo source of dTMP, an essential precursor for DNA biosynthesis. This chain is Thymidylate synthase, found in Bacillus cereus (strain ATCC 10987 / NRS 248).